Reading from the N-terminus, the 440-residue chain is MSLLPTATVATIARYVGQRVTLAGWVYHKTEKGKLIFILLRDGSGTIQCVTFKKNVSEETFATAQSLTQESSCRITGSVRADERAPGGYELDVESIELIGPSHEYPITPKEHGVEFLMAHRHLWVRSAKQHAILRIRAEVIAAAQEWLNEQGFVRFDTPILTATAAEGTTNLFATDYFDLGKAYLAQTGQLYVEAGMMAFGKVYCFGPTFRAEKSKTRRHLTEFWMIEPEVAFADHEDNMRLQEEFVSAIVARVLERRRDDLQTLERDTTLLEQVRPPFPRITYDEAIELIAAHQGEVEGADPLPWGEDFGAPHETLIASKFDRPVFVERFPSAVKAFYMQPDPERPEVALCADLLAPEGYGEIIGGSQRIHDPILLEQRIREHGLRIEDYEWYLDLRRYGTVPHSGFGMGIERVVAWITGTRHIRETIPFPRQLYRIYP.

It belongs to the class-II aminoacyl-tRNA synthetase family. Homodimer.

The protein resides in the cytoplasm. The catalysed reaction is tRNA(Asn) + L-asparagine + ATP = L-asparaginyl-tRNA(Asn) + AMP + diphosphate + H(+). The protein is Asparagine--tRNA ligase of Chloroflexus aurantiacus (strain ATCC 29364 / DSM 637 / Y-400-fl).